A 369-amino-acid polypeptide reads, in one-letter code: H-2 class I histocompatibility antigen, K-K alpha chain (369 aa).

Residues 1-21 form the signal peptide; that stretch reads MAPCMLLLLLAAALAPTQTRA. The alpha-1 stretch occupies residues 22–111; sequence GPHSLRYFHT…ALRYYNQSAG (90 aa). The Extracellular segment spans residues 22–305; that stretch reads GPHSLRYFHT…EPPPSTVSNT (284 aa). N107 carries N-linked (GlcNAc...) asparagine glycosylation. Positions 112-203 are alpha-2; that stretch reads GSHTFQRMYG…QLGNATLPRT (92 aa). An intrachain disulfide couples C122 to C185. N197 carries N-linked (GlcNAc...) asparagine glycosylation. Residues 204 to 295 form an alpha-3 region; it reads DSPKAHVTRH…GLPEPLTLRW (92 aa). The 89-residue stretch at 206–294 folds into the Ig-like C1-type domain; that stretch reads PKAHVTRHSR…QGLPEPLTLR (89 aa). The cysteines at positions 224 and 280 are disulfide-linked. A connecting peptide region spans residues 296 to 305; that stretch reads EPPPSTVSNT. A helical transmembrane segment spans residues 306-328; sequence VIIAVLVVLGAAIVTGAVVAFVM. Topologically, residues 329-369 are cytoplasmic; sequence KMRRRNTGGKGGDYALAPGSQTSDLSLPDCKVMVHDPHSLA. A phosphoserine mark is found at S351 and S354.

This sequence belongs to the MHC class I family. As to quaternary structure, heterodimer of an alpha chain and a beta chain (beta-2-microglobulin).

Its subcellular location is the membrane. In terms of biological role, involved in the presentation of foreign antigens to the immune system. The protein is H-2 class I histocompatibility antigen, K-K alpha chain (H2-K1) of Mus musculus (Mouse).